The following is a 360-amino-acid chain: MAGNSIGQLFKVTTFGESHGLALGCIIDGLPPNMALSEADIQPDLDRRKPGTSRYTTARREADQVHILSGVFAGKTTGTSIGLIIKNNDQRSSDYREIMDVFRPGHADYTYQQKYGIRDYRGGGRSSARETAMRVAAGAIAKKYLSEQFGIQVRAYLAQIGTIKIDPTCVADIAQIDWKYVNNNPFFCPDATAVPKFDELIRCLKKEGDSMGAKLTVIAENVPTGLGEPVFDRLDADLAHALMSINAVKAVEIGDGFAVVSQKGSQHRDQMTPNGFLSNHAGGILGGISSGQPIIAHIAFKPTSSIMVPGKSVNMDNQAIELVTKGRHDPCVGIRAVPIAEAMVAIVLLDHLLRFKAQCG.

The NADP(+) site is built by R48 and R54. FMN is bound by residues 125–127 (RSS), 246–247 (NA), G286, 301–305 (KPTSS), and R327.

This sequence belongs to the chorismate synthase family. In terms of assembly, homotetramer. FMNH2 is required as a cofactor.

The enzyme catalyses 5-O-(1-carboxyvinyl)-3-phosphoshikimate = chorismate + phosphate. The protein operates within metabolic intermediate biosynthesis; chorismate biosynthesis; chorismate from D-erythrose 4-phosphate and phosphoenolpyruvate: step 7/7. Catalyzes the anti-1,4-elimination of the C-3 phosphate and the C-6 proR hydrogen from 5-enolpyruvylshikimate-3-phosphate (EPSP) to yield chorismate, which is the branch point compound that serves as the starting substrate for the three terminal pathways of aromatic amino acid biosynthesis. This reaction introduces a second double bond into the aromatic ring system. The protein is Chorismate synthase of Haemophilus ducreyi (strain 35000HP / ATCC 700724).